Consider the following 427-residue polypeptide: Glutamate-1-semialdehyde 2,1-aminomutase (427 aa).

Residue Lys265 is modified to N6-(pyridoxal phosphate)lysine.

The protein belongs to the class-III pyridoxal-phosphate-dependent aminotransferase family. HemL subfamily. In terms of assembly, homodimer. Pyridoxal 5'-phosphate serves as cofactor.

It localises to the cytoplasm. It carries out the reaction (S)-4-amino-5-oxopentanoate = 5-aminolevulinate. Its pathway is porphyrin-containing compound metabolism; protoporphyrin-IX biosynthesis; 5-aminolevulinate from L-glutamyl-tRNA(Glu): step 2/2. The sequence is that of Glutamate-1-semialdehyde 2,1-aminomutase from Bordetella parapertussis (strain 12822 / ATCC BAA-587 / NCTC 13253).